The sequence spans 816 residues: Transcription factor qa-1f (816 aa).

Positions 76 to 103 (CDQCRAAREKCDGIQPACFPCVSQGRSC) form a DNA-binding region, zn(2)-C6 fungal-type. A compositionally biased stretch (polar residues) spans 184–202 (SGQAAQDPSEDGQSPSEDI). The interval 184 to 235 (SGQAAQDPSEDGQSPSEDINVQDAGAKTSDFPHAPHLTFSAPKSSTAETRTL) is disordered.

The protein localises to the nucleus. Functionally, transcription activator; part of the qa gene cluster that mediates the catabolism of quinic acid (QA) and as such, allows the use of QA as a sole carbon source. Activates the expression of qa cluster genes by binding to a 16 base-pair consensus sequence 5'-GGRTAARYRYTTAYCC-3' present in the promoters of the target genes. Regulates its own expression. May regulate the expression of many other genes inclusing genes with products in 8 mutually connected metabolic pathways: (1) starch and sucrose metabolism; (2) glycolysis/glucanogenesis; (3) TCA Cycle; (4) butanoate metabolism; (5) pyruvate metabolism; (6) aromatic amino acid and QA metabolism; (7) valine, leucine, and isoleucine degradation; and (8) transport of sugars and amino acids. The polypeptide is Transcription factor qa-1f (Neurospora crassa (strain ATCC 24698 / 74-OR23-1A / CBS 708.71 / DSM 1257 / FGSC 987)).